The sequence spans 225 residues: Alpha-tubulin N-acetyltransferase 1 (225 aa).

An N-acetyltransferase domain is found at 1–190; sequence MEFPFDVDAL…NNFVIFEGFF (190 aa). An N6-acetyllysine; by autocatalysis modification is found at lysine 56. 124–137 lines the acetyl-CoA pocket; that stretch reads FYIHESLQRHGHGR. The residue at position 146 (lysine 146) is an N6-acetyllysine; by autocatalysis. Residue 160 to 169 participates in acetyl-CoA binding; that stretch reads SQKLLKFLNK. Residues 195 to 225 form a disordered region; the sequence is PPARKLPPKRAEGDIKPYSSSDRESGLPQGW. Residues 203-219 show a composition bias toward basic and acidic residues; it reads KRAEGDIKPYSSSDRES. Residue lysine 210 is modified to N6-acetyllysine; by autocatalysis.

This sequence belongs to the acetyltransferase ATAT1 family. Component of the BBSome complex. Interacts with AP2 alpha-adaptins, including AP2A2, but not with AP1 gamma-adaptin (AP1G1/AP1G2); this interaction is required for efficient alpha-tubulin acetylation, hence clathrin-coated pits are sites of microtubule acetylation. Autoacetylation strongly increases tubulin acetylation.

Its subcellular location is the cytoplasm. It is found in the membrane. The protein localises to the clathrin-coated pit. The protein resides in the cell junction. It localises to the focal adhesion. Its subcellular location is the cell projection. It is found in the axon. The protein localises to the cytoskeleton. The protein resides in the spindle. The enzyme catalyses L-lysyl-[alpha-tubulin] + acetyl-CoA = N(6)-acetyl-L-lysyl-[alpha-tubulin] + CoA + H(+). Functionally, specifically acetylates 'Lys-40' in alpha-tubulin on the lumenal side of microtubules. Promotes microtubule destabilization and accelerates microtubule dynamics; this activity may be independent of acetylation activity. Acetylates alpha-tubulin with a slow enzymatic rate, due to a catalytic site that is not optimized for acetyl transfer. Enters the microtubule through each end and diffuses quickly throughout the lumen of microtubules. Acetylates only long/old microtubules because of its slow acetylation rate since it does not have time to act on dynamically unstable microtubules before the enzyme is released. Required for normal sperm flagellar function. Promotes directional cell locomotion and chemotaxis, through AP2A2-dependent acetylation of alpha-tubulin at clathrin-coated pits that are concentrated at the leading edge of migrating cells. May facilitate primary cilium assembly. This is Alpha-tubulin N-acetyltransferase 1 from Bos taurus (Bovine).